The chain runs to 88 residues: Small ribosomal subunit protein bS20 (88 aa).

Positions 1–21 are disordered; that stretch reads MANTTSAKKATRKIARRTAVN.

Belongs to the bacterial ribosomal protein bS20 family.

In terms of biological role, binds directly to 16S ribosomal RNA. The protein is Small ribosomal subunit protein bS20 of Sinorhizobium fredii (strain NBRC 101917 / NGR234).